A 184-amino-acid polypeptide reads, in one-letter code: Alpha-tubulin N-acetyltransferase (184 aa).

One can recognise an N-acetyltransferase domain in the interval 1–170; sequence METFNHIDIK…NHFVIFSNYF (170 aa). Acetyl-CoA contacts are provided by residues 104-117 and 140-149; these read FYIL…GLGI and SYKLQNFLKK.

The protein belongs to the acetyltransferase ATAT1 family.

It catalyses the reaction L-lysyl-[alpha-tubulin] + acetyl-CoA = N(6)-acetyl-L-lysyl-[alpha-tubulin] + CoA + H(+). Specifically acetylates 'Lys-40' in alpha-tubulin on the lumenal side of microtubules. Promotes microtubule destabilization and accelerates microtubule dynamics; this activity may be independent of acetylation activity. Acetylates alpha-tubulin with a slow enzymatic rate, due to a catalytic site that is not optimized for acetyl transfer. Enters the microtubule through each end and diffuses quickly throughout the lumen of microtubules. Acetylates only long/old microtubules because of its slow acetylation rate since it does not have time to act on dynamically unstable microtubules before the enzyme is released. This is Alpha-tubulin N-acetyltransferase from Plasmodium falciparum (isolate 3D7).